The sequence spans 301 residues: Phosphatidylglycerol--prolipoprotein diacylglyceryl transferase (301 aa).

3 helical membrane passes run 17–37 (LAVRWYGLMYLVAFIAAIVVG), 59–79 (MLFYGVLGTILGGRLGYVLFY), and 97–117 (GGMSFHGGFLGVTLAMVLFAY). R142 contacts a 1,2-diacyl-sn-glycero-3-phospho-(1'-sn-glycerol). Transmembrane regions (helical) follow at residues 230–250 (MGAISAVFLIGYGLARFTVEF) and 265–285 (LSMGQWLSLPMILVGIGLLVW).

The protein belongs to the Lgt family.

The protein localises to the cell inner membrane. The catalysed reaction is L-cysteinyl-[prolipoprotein] + a 1,2-diacyl-sn-glycero-3-phospho-(1'-sn-glycerol) = an S-1,2-diacyl-sn-glyceryl-L-cysteinyl-[prolipoprotein] + sn-glycerol 1-phosphate + H(+). It participates in protein modification; lipoprotein biosynthesis (diacylglyceryl transfer). Its function is as follows. Catalyzes the transfer of the diacylglyceryl group from phosphatidylglycerol to the sulfhydryl group of the N-terminal cysteine of a prolipoprotein, the first step in the formation of mature lipoproteins. The polypeptide is Phosphatidylglycerol--prolipoprotein diacylglyceryl transferase (Paraburkholderia phytofirmans (strain DSM 17436 / LMG 22146 / PsJN) (Burkholderia phytofirmans)).